The following is a 180-amino-acid chain: Putative manganese efflux pump MntP (180 aa).

Helical transmembrane passes span 1-21 (MLSV…ISIT), 34-54 (ILWY…IGYV), 63-83 (ISTY…LNMI), 103-123 (VTLL…TFAI), 129-149 (VIPC…GIFI), and 160-180 (KFQI…LLGF).

The protein belongs to the MntP (TC 9.B.29) family.

Its subcellular location is the cell membrane. In terms of biological role, probably functions as a manganese efflux pump. This is Putative manganese efflux pump MntP from Methanosphaera stadtmanae (strain ATCC 43021 / DSM 3091 / JCM 11832 / MCB-3).